A 690-amino-acid polypeptide reads, in one-letter code: Elongation factor G (690 aa).

The 276-residue stretch at 8-283 folds into the tr-type G domain; it reads EKYRNIGIMA…AVVDYLPSPL (276 aa). GTP-binding positions include 17–24, 81–85, and 135–138; these read AHIDAGKT, DTPGH, and NKLD.

Belongs to the TRAFAC class translation factor GTPase superfamily. Classic translation factor GTPase family. EF-G/EF-2 subfamily.

The protein localises to the cytoplasm. In terms of biological role, catalyzes the GTP-dependent ribosomal translocation step during translation elongation. During this step, the ribosome changes from the pre-translocational (PRE) to the post-translocational (POST) state as the newly formed A-site-bound peptidyl-tRNA and P-site-bound deacylated tRNA move to the P and E sites, respectively. Catalyzes the coordinated movement of the two tRNA molecules, the mRNA and conformational changes in the ribosome. This chain is Elongation factor G, found in Rhizorhabdus wittichii (strain DSM 6014 / CCUG 31198 / JCM 15750 / NBRC 105917 / EY 4224 / RW1) (Sphingomonas wittichii).